The chain runs to 361 residues: Adenosine kinase (361 aa).

The Nuclear localization signal signature appears at 7–15; the sequence is PKPKKLKVE. Residue aspartate 34 participates in adenosine binding. A Mg(2+)-binding site is contributed by serine 48. A Phosphotyrosine modification is found at tyrosine 76. Mg(2+) contacts are provided by aspartate 146 and asparagine 147. Glutamine 305 contributes to the adenosine binding site. Residue aspartate 316 is part of the active site. The Proton acceptor role is filled by aspartate 316.

The protein belongs to the carbohydrate kinase PfkB family. In terms of assembly, monomer. Mg(2+) is required as a cofactor. Post-translationally, the N-terminus is blocked.

The protein localises to the nucleus. It carries out the reaction adenosine + ATP = AMP + ADP + H(+). The protein operates within purine metabolism; AMP biosynthesis via salvage pathway; AMP from adenosine: step 1/1. With respect to regulation, activity is inhibited by 5-iodotubercidin and 5'-amino-5'-deoxyadenosine. In terms of biological role, catalyzes the phosphorylation of the purine nucleoside adenosine at the 5' position in an ATP-dependent manner. Serves as a potential regulator of concentrations of extracellular adenosine and intracellular adenine nucleotides. In Cricetulus griseus (Chinese hamster), this protein is Adenosine kinase (ADK).